The primary structure comprises 388 residues: Succinate--CoA ligase [ADP-forming] subunit beta (388 aa).

The ATP-grasp domain occupies 9–244; it reads KSLFAEYGLP…PSQDDAREAH (236 aa). Residues Lys46, 53–55, Glu99, Thr102, and Glu107 each bind ATP; that span reads GRG. Mg(2+) contacts are provided by Asn199 and Asp213. Substrate contacts are provided by residues Asn264 and 321-323; that span reads GIV.

This sequence belongs to the succinate/malate CoA ligase beta subunit family. Heterotetramer of two alpha and two beta subunits. It depends on Mg(2+) as a cofactor.

It carries out the reaction succinate + ATP + CoA = succinyl-CoA + ADP + phosphate. The enzyme catalyses GTP + succinate + CoA = succinyl-CoA + GDP + phosphate. The protein operates within carbohydrate metabolism; tricarboxylic acid cycle; succinate from succinyl-CoA (ligase route): step 1/1. Its function is as follows. Succinyl-CoA synthetase functions in the citric acid cycle (TCA), coupling the hydrolysis of succinyl-CoA to the synthesis of either ATP or GTP and thus represents the only step of substrate-level phosphorylation in the TCA. The beta subunit provides nucleotide specificity of the enzyme and binds the substrate succinate, while the binding sites for coenzyme A and phosphate are found in the alpha subunit. The protein is Succinate--CoA ligase [ADP-forming] subunit beta of Shewanella denitrificans (strain OS217 / ATCC BAA-1090 / DSM 15013).